Here is a 221-residue protein sequence, read N- to C-terminus: Glutathione S-transferase Z1 (221 aa).

Residues 7-88 (EKLKLYSYWR…YLDEKYPEPP (82 aa)) enclose the GST N-terminal domain. Residues 17–18 (SS), 17–22 (SSCAHR), glutamine 46, 46–47 (QF), 59–60 (TV), valine 60, 72–73 (DS), glutamine 112, and 116–118 (NLA) each bind glutathione. The GST C-terminal domain occupies 93-218 (DLHKRAVNYQ…LPEKQPDAPS (126 aa)).

It belongs to the GST superfamily. Zeta family. Homodimer.

The protein resides in the cytoplasm. It localises to the cytosol. The enzyme catalyses RX + glutathione = an S-substituted glutathione + a halide anion + H(+). Acts a maleylacetone isomerase. Also catalyzes the glutathione-dependent dehalogenation of dichloroacetic acid to glyoxylic acid. In vitro, possesses glutathione peroxidase activity toward cumene hydroperoxide and linoleic acid-13-hydroperoxide. This chain is Glutathione S-transferase Z1 (GSTZ1), found in Arabidopsis thaliana (Mouse-ear cress).